The following is a 396-amino-acid chain: Tryptophan synthase beta chain (396 aa).

At lysine 86 the chain carries N6-(pyridoxal phosphate)lysine.

It belongs to the TrpB family. Tetramer of two alpha and two beta chains. It depends on pyridoxal 5'-phosphate as a cofactor.

The enzyme catalyses (1S,2R)-1-C-(indol-3-yl)glycerol 3-phosphate + L-serine = D-glyceraldehyde 3-phosphate + L-tryptophan + H2O. Its pathway is amino-acid biosynthesis; L-tryptophan biosynthesis; L-tryptophan from chorismate: step 5/5. In terms of biological role, the beta subunit is responsible for the synthesis of L-tryptophan from indole and L-serine. The protein is Tryptophan synthase beta chain of Pectobacterium atrosepticum (strain SCRI 1043 / ATCC BAA-672) (Erwinia carotovora subsp. atroseptica).